A 1417-amino-acid polypeptide reads, in one-letter code: DExH-box ATP-dependent RNA helicase DExH4, chloroplastic (1417 aa).

Basic residues predominate over residues 1-12 (MAPTKKPQKNKQ). Residues 1–37 (MAPTKKPQKNKQSKNEIASSLIPNSGHKKPSKAPKLL) are disordered. The N-terminal 61 residues, 1-61 (MAPTKKPQKN…NFRRTPSPVT (61 aa)), are a transit peptide targeting the chloroplast. In terms of domain architecture, Helicase ATP-binding spans 607–781 (LQKLKEKDVL…FGQCPIITAQ (175 aa)). Residue 620-627 (GETGSGKT) participates in ATP binding. The DEIH box motif lies at 722–725 (DEVH). Residues 868 to 1043 (LLEELICHID…ELCLHIKLLG (176 aa)) enclose the Helicase C-terminal domain.

It belongs to the DExH box helicase family.

It localises to the plastid. The protein localises to the chloroplast. The catalysed reaction is ATP + H2O = ADP + phosphate + H(+). The sequence is that of DExH-box ATP-dependent RNA helicase DExH4, chloroplastic from Arabidopsis thaliana (Mouse-ear cress).